A 54-amino-acid polypeptide reads, in one-letter code: UPF0235 protein in proC 3'region (54 aa).

It belongs to the UPF0235 family.

This Vibrio alginolyticus protein is UPF0235 protein in proC 3'region.